The chain runs to 87 residues: Small ribosomal subunit protein bS18 (87 aa).

Belongs to the bacterial ribosomal protein bS18 family. In terms of assembly, part of the 30S ribosomal subunit. Forms a tight heterodimer with protein bS6.

Its function is as follows. Binds as a heterodimer with protein bS6 to the central domain of the 16S rRNA, where it helps stabilize the platform of the 30S subunit. This is Small ribosomal subunit protein bS18 from Sulfurimonas denitrificans (strain ATCC 33889 / DSM 1251) (Thiomicrospira denitrificans (strain ATCC 33889 / DSM 1251)).